The following is a 227-amino-acid chain: Octanoyltransferase (227 aa).

A BPL/LPL catalytic domain is found at 35-210; that stretch reads DKTPDEIWLV…TFLQLVGYSA (176 aa). Substrate contacts are provided by residues 74 to 81, 141 to 143, and 154 to 156; these read RGGQVTYH, SLG, and GLA. Catalysis depends on C172, which acts as the Acyl-thioester intermediate.

Belongs to the LipB family.

The protein resides in the cytoplasm. It catalyses the reaction octanoyl-[ACP] + L-lysyl-[protein] = N(6)-octanoyl-L-lysyl-[protein] + holo-[ACP] + H(+). It participates in protein modification; protein lipoylation via endogenous pathway; protein N(6)-(lipoyl)lysine from octanoyl-[acyl-carrier-protein]: step 1/2. Catalyzes the transfer of endogenously produced octanoic acid from octanoyl-acyl-carrier-protein onto the lipoyl domains of lipoate-dependent enzymes. Lipoyl-ACP can also act as a substrate although octanoyl-ACP is likely to be the physiological substrate. The sequence is that of Octanoyltransferase from Pectobacterium atrosepticum (strain SCRI 1043 / ATCC BAA-672) (Erwinia carotovora subsp. atroseptica).